The primary structure comprises 475 residues: Tubulin epsilon chain (475 aa).

148-154 (GGGTGSG) contacts GTP.

It belongs to the tubulin family. In terms of assembly, found in a complex with TEDC1, TEDC2, TUBE1 and TUBD1.

Its subcellular location is the cytoplasm. It is found in the cytoskeleton. It localises to the microtubule organizing center. The protein localises to the centrosome. The sequence is that of Tubulin epsilon chain (Tube1) from Mus musculus (Mouse).